The chain runs to 48 residues: ATP synthase protein 8 (48 aa).

The chain crosses the membrane as a helical span at residues 4-24 (LVPFFFVNQVVYAFVILTVLI).

Belongs to the ATPase protein 8 family. As to quaternary structure, F-type ATPases have 2 components, CF(1) - the catalytic core - and CF(0) - the membrane proton channel.

Its subcellular location is the mitochondrion membrane. Mitochondrial membrane ATP synthase (F(1)F(0) ATP synthase or Complex V) produces ATP from ADP in the presence of a proton gradient across the membrane which is generated by electron transport complexes of the respiratory chain. F-type ATPases consist of two structural domains, F(1) - containing the extramembraneous catalytic core and F(0) - containing the membrane proton channel, linked together by a central stalk and a peripheral stalk. During catalysis, ATP synthesis in the catalytic domain of F(1) is coupled via a rotary mechanism of the central stalk subunits to proton translocation. Part of the complex F(0) domain. Minor subunit located with subunit a in the membrane. This chain is ATP synthase protein 8 (atp8), found in Aspergillus amstelodami.